We begin with the raw amino-acid sequence, 169 residues long: S-ribosylhomocysteine lyase (169 aa).

Residues His54, His58, and Cys129 each contribute to the Fe cation site.

It belongs to the LuxS family. In terms of assembly, homodimer. Fe cation serves as cofactor.

It catalyses the reaction S-(5-deoxy-D-ribos-5-yl)-L-homocysteine = (S)-4,5-dihydroxypentane-2,3-dione + L-homocysteine. In terms of biological role, involved in the synthesis of autoinducer 2 (AI-2) which is secreted by bacteria and is used to communicate both the cell density and the metabolic potential of the environment. The regulation of gene expression in response to changes in cell density is called quorum sensing. Catalyzes the transformation of S-ribosylhomocysteine (RHC) to homocysteine (HC) and 4,5-dihydroxy-2,3-pentadione (DPD). The sequence is that of S-ribosylhomocysteine lyase from Glaesserella parasuis serovar 5 (strain SH0165) (Haemophilus parasuis).